We begin with the raw amino-acid sequence, 422 residues long: UDP-N-acetylglucosamine 1-carboxyvinyltransferase (422 aa).

23–24 (KN) contributes to the phosphoenolpyruvate binding site. Arginine 92 is a binding site for UDP-N-acetyl-alpha-D-glucosamine. The active-site Proton donor is the cysteine 116. Position 116 is a 2-(S-cysteinyl)pyruvic acid O-phosphothioketal (cysteine 116). UDP-N-acetyl-alpha-D-glucosamine is bound by residues 121-125 (RPVDL), 161-164 (KVSV), aspartate 306, and isoleucine 328.

The protein belongs to the EPSP synthase family. MurA subfamily.

Its subcellular location is the cytoplasm. The catalysed reaction is phosphoenolpyruvate + UDP-N-acetyl-alpha-D-glucosamine = UDP-N-acetyl-3-O-(1-carboxyvinyl)-alpha-D-glucosamine + phosphate. The protein operates within cell wall biogenesis; peptidoglycan biosynthesis. In terms of biological role, cell wall formation. Adds enolpyruvyl to UDP-N-acetylglucosamine. This Aliivibrio salmonicida (strain LFI1238) (Vibrio salmonicida (strain LFI1238)) protein is UDP-N-acetylglucosamine 1-carboxyvinyltransferase.